We begin with the raw amino-acid sequence, 165 residues long: MFVSTYEGAIDAKGRVSIPAPFRAALGGSSRVFVWQAPDGSGALEGGGEELMELYRETLAELPLQSPIREAIVTCIIAASAELKIDDTGRVKLPEDLCEAGELSGKIKFSGQMDSFRIWNPERFSLHQMRMRSIVTAPETLDAFASAYNRVRQRRMAAGRGGEGS.

2 SpoVT-AbrB domains span residues T5–L51 and S80–R123.

Belongs to the MraZ family. As to quaternary structure, forms oligomers.

Its subcellular location is the cytoplasm. It is found in the nucleoid. The polypeptide is Transcriptional regulator MraZ (Hyphomonas neptunium (strain ATCC 15444)).